Here is an 875-residue protein sequence, read N- to C-terminus: Phosphatidylinositol 3-kinase VPS34 (875 aa).

The C2 PI3K-type domain occupies 14–188; the sequence is LDVPLKVKIK…WLDEITISKL (175 aa). The 234-residue stretch at 293 to 526 folds into the PIK helical domain; the sequence is LDKQVKPDIK…SSFWSRLDKK (234 aa). The 267-residue stretch at 593–859 folds into the PI3K/PI4K catalytic domain; it reads CPETSKVFKS…LINDSVNALL (267 aa). Residues 599–605 form a G-loop region; the sequence is VFKSSLS. Residues 728–736 are catalytic loop; the sequence is GVGDRHLDN. The interval 747-768 is activation loop; sequence HADFGYILGQDPKPFPPLMKLP.

The protein belongs to the PI3/PI4-kinase family. Component of the autophagy-specific VPS34 PI3-kinase complex I composed of VPS15, VPS30, VPS34, ATG14 and ATG38, and of the VPS34 PI3-kinase complex II composed of VPS15, VPS30, VPS34 and VPS38. Interacts directly with ATG38. Interacts directly with VPS34. Post-translationally, autophosphorylated. Might also be phosphorylated by VPS15.

The protein localises to the golgi apparatus. Its subcellular location is the trans-Golgi network membrane. The protein resides in the endosome membrane. It carries out the reaction a 1,2-diacyl-sn-glycero-3-phospho-(1D-myo-inositol) + ATP = a 1,2-diacyl-sn-glycero-3-phospho-(1D-myo-inositol-3-phosphate) + ADP + H(+). Its activity is regulated as follows. Phosphatidylinositol 3-kinase activity is directly dependent on VPS15 protein kinase activity. In terms of biological role, phosphatidylinositol 3-kinase required for cytoplasm to vacuole transport (Cvt) and autophagy as a part of the autophagy-specific VPS34 PI3-kinase complex I. This complex is essential to recruit the ATG8-phosphatidylinositol conjugate and the ATG12-ATG5 conjugate to the pre-autophagosomal structure. Also involved in endosome-to-Golgi retrograde transport as part of the VPS34 PI3-kinase complex II. This second complex is required for the endosome-to-Golgi retrieval of PEP1 and KEX2, and the recruitment of VPS5 and VPS7, two components of the retromer complex, to endosomal membranes (probably through the synthesis of a specific pool of phosphatidylinositol 3-phosphate recruiting the retromer to the endosomes). Its activation by VPS15 may lead to the phosphorylation of phosphatidylinositol in the sorting compartment membrane. Finally, it might also be involved in ethanol tolerance and cell wall integrity. This chain is Phosphatidylinositol 3-kinase VPS34 (VPS34), found in Saccharomyces cerevisiae (strain ATCC 204508 / S288c) (Baker's yeast).